Here is a 322-residue protein sequence, read N- to C-terminus: Peroxidase 66 (322 aa).

The N-terminal stretch at 1–24 (MAFSKGLIFAMIFAVLAIVKPSEA) is a signal peptide. 2 disulfide bridges follow: Cys35–Cys114 and Cys68–Cys73. Residue His66 is the Proton acceptor of the active site. 4 residues coordinate Ca(2+): Asp67, Gly72, Asp74, and Ser76. N-linked (GlcNAc...) asparagine glycosylation occurs at Asn155. Pro161 contributes to the substrate binding site. N-linked (GlcNAc...) asparagine glycosylation occurs at Asn166. Residue His191 participates in heme b binding. A Ca(2+)-binding site is contributed by Thr192. Cys198 and Cys230 are disulfide-bonded. N-linked (GlcNAc...) asparagine glycosylation occurs at Asn207. 3 residues coordinate Ca(2+): Asp245, Thr247, and Asp252.

This sequence belongs to the peroxidase family. Classical plant (class III) peroxidase subfamily. It depends on heme b as a cofactor. Ca(2+) is required as a cofactor.

The protein localises to the secreted. It catalyses the reaction 2 a phenolic donor + H2O2 = 2 a phenolic radical donor + 2 H2O. Functionally, removal of H(2)O(2), oxidation of toxic reductants, biosynthesis and degradation of lignin, suberization, auxin catabolism, response to environmental stresses such as wounding, pathogen attack and oxidative stress. These functions might be dependent on each isozyme/isoform in each plant tissue. In Arabidopsis thaliana (Mouse-ear cress), this protein is Peroxidase 66 (PER66).